A 118-amino-acid polypeptide reads, in one-letter code: Ribosome-binding factor A (118 aa).

It belongs to the RbfA family. As to quaternary structure, monomer. Binds 30S ribosomal subunits, but not 50S ribosomal subunits or 70S ribosomes.

Its subcellular location is the cytoplasm. Functionally, one of several proteins that assist in the late maturation steps of the functional core of the 30S ribosomal subunit. Associates with free 30S ribosomal subunits (but not with 30S subunits that are part of 70S ribosomes or polysomes). Required for efficient processing of 16S rRNA. May interact with the 5'-terminal helix region of 16S rRNA. The polypeptide is Ribosome-binding factor A (Dehalococcoides mccartyi (strain ATCC BAA-2100 / JCM 16839 / KCTC 5957 / BAV1)).